Consider the following 446-residue polypeptide: Tubulin beta chain (446 aa).

Positions 11, 69, 138, 142, 143, 144, 204, and 226 each coordinate GTP. E69 contributes to the Mg(2+) binding site. The disordered stretch occupies residues 422–446; that stretch reads YQQYQDAGIDEEEEEYEEELPEGEE. Acidic residues predominate over residues 429–446; that stretch reads GIDEEEEEYEEELPEGEE.

Belongs to the tubulin family. As to quaternary structure, dimer of alpha and beta chains. A typical microtubule is a hollow water-filled tube with an outer diameter of 25 nm and an inner diameter of 15 nM. Alpha-beta heterodimers associate head-to-tail to form protofilaments running lengthwise along the microtubule wall with the beta-tubulin subunit facing the microtubule plus end conferring a structural polarity. Microtubules usually have 13 protofilaments but different protofilament numbers can be found in some organisms and specialized cells. Requires Mg(2+) as cofactor.

It localises to the cytoplasm. The protein resides in the cytoskeleton. Its function is as follows. Tubulin is the major constituent of microtubules, a cylinder consisting of laterally associated linear protofilaments composed of alpha- and beta-tubulin heterodimers. Microtubules grow by the addition of GTP-tubulin dimers to the microtubule end, where a stabilizing cap forms. Below the cap, tubulin dimers are in GDP-bound state, owing to GTPase activity of alpha-tubulin. This is Tubulin beta chain (TUB2) from Gibberella zeae (strain ATCC MYA-4620 / CBS 123657 / FGSC 9075 / NRRL 31084 / PH-1) (Wheat head blight fungus).